A 137-amino-acid polypeptide reads, in one-letter code: Nucleoside diphosphate kinase (137 aa).

ATP is bound by residues Lys9, Phe57, Arg85, Thr91, Arg102, and Asn112. His115 (pros-phosphohistidine intermediate) is an active-site residue.

It belongs to the NDK family. In terms of assembly, homotetramer. Mg(2+) serves as cofactor.

The protein resides in the cytoplasm. The enzyme catalyses a 2'-deoxyribonucleoside 5'-diphosphate + ATP = a 2'-deoxyribonucleoside 5'-triphosphate + ADP. It catalyses the reaction a ribonucleoside 5'-diphosphate + ATP = a ribonucleoside 5'-triphosphate + ADP. Functionally, major role in the synthesis of nucleoside triphosphates other than ATP. The ATP gamma phosphate is transferred to the NDP beta phosphate via a ping-pong mechanism, using a phosphorylated active-site intermediate. The sequence is that of Nucleoside diphosphate kinase from Leptospira biflexa serovar Patoc (strain Patoc 1 / ATCC 23582 / Paris).